A 248-amino-acid polypeptide reads, in one-letter code: Myelin protein P0 (248 aa).

The N-terminal stretch at methionine 1 to glutamine 28 is a signal peptide. Residues alanine 29–glycine 155 are Extracellular-facing. Residues isoleucine 30–threonine 143 form the Ig-like V-type domain. Cysteines 50 and 127 form a disulfide. Residue asparagine 122 is glycosylated (N-linked (GlcNAc...) (complex) asparagine). The helical transmembrane segment at valine 156–phenylalanine 176 threads the bilayer. Over tyrosine 177–lysine 248 the chain is Cytoplasmic. Serine 210 carries the post-translational modification Phosphoserine; by PKC. A disordered region spans residues aspartate 224–lysine 248. 2 positions are modified to phosphoserine: serine 226 and serine 228. A phosphoserine; by PKC mark is found at serine 233 and serine 243.

The protein belongs to the myelin P0 protein family. In terms of assembly, homodimer and homotetramer. In terms of processing, N-glycosylated; contains sulfate-substituted glycan. Found only in peripheral nervous system Schwann cells.

It is found in the cell membrane. Functionally, is an adhesion molecule necessary for normal myelination in the peripheral nervous system. It mediates adhesion between adjacent myelin wraps and ultimately drives myelin compaction. This Bos taurus (Bovine) protein is Myelin protein P0 (MPZ).